A 535-amino-acid polypeptide reads, in one-letter code: Secreted lipase 5 (535 aa).

The first 17 residues, 1-17, serve as a signal peptide directing secretion; the sequence is MHLKSLLLAALPLLLEA. 2 N-linked (GlcNAc...) asparagine glycosylation sites follow: Asn-32 and Asn-119. Ser-241 acts as the Acyl-ester intermediate in catalysis. 4 N-linked (GlcNAc...) asparagine glycosylation sites follow: Asn-282, Asn-341, Asn-347, and Asn-432.

This sequence belongs to the type-B carboxylesterase/lipase family.

It localises to the secreted. It carries out the reaction a carboxylic ester + H2O = an alcohol + a carboxylate + H(+). Its function is as follows. Secreted lipase involved in plant virulence. Has a substrate preference for p-nitrophenyl esters with a carbon chain length of C8 (p-nitrophenyl caprylate). The protein is Secreted lipase 5 of Gibberella zeae (strain ATCC MYA-4620 / CBS 123657 / FGSC 9075 / NRRL 31084 / PH-1) (Wheat head blight fungus).